A 350-amino-acid chain; its full sequence is Protein Wnt-8b (350 aa).

The first 21 residues, Met-1–Ala-21, serve as a signal peptide directing secretion. Cys-53 and Cys-64 are oxidised to a cystine. A glycan (N-linked (GlcNAc...) asparagine) is linked at Asn-102. Disulfide bonds link Cys-103-Cys-111, Cys-113-Cys-131, Cys-179-Cys-193, Cys-181-Cys-188, Cys-255-Cys-293, Cys-271-Cys-286, Cys-290-Cys-332, Cys-308-Cys-323, Cys-310-Cys-320, and Cys-315-Cys-316. Residue Ser-185 is the site of O-palmitoleoyl serine attachment. The N-linked (GlcNAc...) asparagine glycan is linked to Asn-258.

Belongs to the Wnt family. Post-translationally, palmitoleoylation is required for efficient binding to frizzled receptors. Depalmitoleoylation leads to Wnt signaling pathway inhibition. In terms of processing, proteolytic processing by TIKI1 and TIKI2 promotes oxidation and formation of large disulfide-bond oligomers, leading to inactivation of WNT8B.

It localises to the secreted. The protein resides in the extracellular space. Its subcellular location is the extracellular matrix. Its function is as follows. Ligand for members of the frizzled family of seven transmembrane receptors. May play an important role in the development and differentiation of certain forebrain structures, notably the hippocampus. This chain is Protein Wnt-8b (Wnt8b), found in Mus musculus (Mouse).